Reading from the N-terminus, the 761-residue chain is Xaa-Pro dipeptidyl-peptidase (761 aa).

Active-site charge relay system residues include serine 349, aspartate 469, and histidine 499.

The protein belongs to the peptidase S15 family. In terms of assembly, homodimer.

Its subcellular location is the cytoplasm. The enzyme catalyses Hydrolyzes Xaa-Pro-|- bonds to release unblocked, N-terminal dipeptides from substrates including Ala-Pro-|-p-nitroanilide and (sequentially) Tyr-Pro-|-Phe-Pro-|-Gly-Pro-|-Ile.. Its function is as follows. Removes N-terminal dipeptides sequentially from polypeptides having unsubstituted N-termini provided that the penultimate residue is proline. The polypeptide is Xaa-Pro dipeptidyl-peptidase (Streptococcus equi subsp. equi (strain 4047)).